Here is a 282-residue protein sequence, read N- to C-terminus: RNA-4 uncharacterized 31.9 kDa protein (282 aa).

This chain is RNA-4 uncharacterized 31.9 kDa protein, found in Beta macrocarpa (Beet).